An 821-amino-acid polypeptide reads, in one-letter code: Calpain-3 (821 aa).

Residues 1–37 (MPTVISPTVAPRTGAEPRSPGPVPHPAQGKTTEAGGG) are disordered. The Calpain catalytic domain maps to 74–417 (LYLDPEFPPD…FTKLEICNLT (344 aa)). Active-site residues include Cys129, His334, and Asn358. Residues 418-586 (ADALESDKLQ…KRNLSEEAEN (169 aa)) form a domain III region. The tract at residues 587–649 (TISVDRPVKK…RPGHTDQESE (63 aa)) is linker. The disordered stretch occupies residues 603-651 (IFVSDRANSNKELGVDQEAEEGKDKTGPDKQGESPQPRPGHTDQESEEQ). Residues 622 to 634 (EEGKDKTGPDKQG) show a composition bias toward basic and acidic residues. EF-hand domains lie at 649-683 (EEQQQFRNIFRQIAGDDMEICADELKNVLNTVVNK), 692-725 (FTLESCRSMIALMDTDGSGRLNLQEFHHLWKKIK), 722-757 (KKIKAWQKIFKHYDTDHSGTINSYEMRNAVNDAGFH), and 787-821 (VRLEGMFRAFHAFDKDGDGIIKLNVLEWLQLTMYA). Positions 650–820 (EQQQFRNIFR…VLEWLQLTMY (171 aa)) are domain IV. Ala662, Asp665, Glu667, Glu672, Asp705, Asp707, Ser709, Arg711, Glu716, Asp735, Asp737, Ser739, Thr741, Glu746, Asp800, Asp802, Asp804, and Ile806 together coordinate Ca(2+).

Belongs to the peptidase C2 family. Homodimer; via EF-hand domain 4. Interacts with TTN/titin. Interacts with CMYA5; this interaction, which results in CMYA5 proteolysis, may protect CAPN3 from autolysis. Interacts with SIMC1. Interacts with UTP25; the interaction is required for CAPN3 translocation to the nucleolus. In terms of tissue distribution, skeletal muscle.

It is found in the cytoplasm. It localises to the nucleus. Its subcellular location is the nucleolus. The enzyme catalyses Broad endopeptidase activity.. Activated by micromolar concentrations of calcium and inhibited by calpastatin. Calcium-regulated non-lysosomal thiol-protease. Proteolytically cleaves CTBP1 at 'His-399'. Mediates, with UTP25, the proteasome-independent degradation of p53/TP53. The polypeptide is Calpain-3 (Capn3) (Rattus norvegicus (Rat)).